A 136-amino-acid polypeptide reads, in one-letter code: TBK1 inhibitor DP96R (136 aa).

Positions 66 to 86 are disordered; sequence NNALEKPAGANNIPEKSAGRM.

This sequence belongs to the asfivirus DP96R family.

Inhibits cGAS-STING-mediated type I IFN expression and NF-kB activation by inhibiting TBK1 and IKBKB/IKKB. Inhibits host TBK1 phosphorylation. The sequence is that of TBK1 inhibitor DP96R from Ornithodoros (relapsing fever ticks).